Here is a 230-residue protein sequence, read N- to C-terminus: Cytidylate kinase (230 aa).

Position 10 to 18 (10 to 18) interacts with ATP; the sequence is GPAGSGKST.

It belongs to the cytidylate kinase family. Type 1 subfamily.

It localises to the cytoplasm. It carries out the reaction CMP + ATP = CDP + ADP. It catalyses the reaction dCMP + ATP = dCDP + ADP. In Leptospira borgpetersenii serovar Hardjo-bovis (strain L550), this protein is Cytidylate kinase.